Consider the following 224-residue polypeptide: Transcription cofactor HES-6 (224 aa).

The segment at 1-31 is disordered; it reads MAPPAAPGRDRVGREDEDGWETRGDRKARKP. The span at 8–25 shows a compositional bias: basic and acidic residues; sequence GRDRVGREDEDGWETRGD. The bHLH domain maps to 25–77; sequence DRKARKPLVEKKRRARINESLQELRLLLAGAEVQAKLENAEVLELTVRRVQGV. In terms of domain architecture, Orange spans 96–129; the sequence is FAAGYIQCMHEVHTFVSTCQAIDATVAAELLNHL. Over residues 147–161 the composition is skewed to low complexity; sequence DALAGPPRAPGRSGW. The interval 147 to 205 is disordered; sequence DALAGPPRAPGRSGWPAGGAPGSPIPSPPGPGDDLCSDLEEAPEAELSQAPAEGPDLVP. Positions 181–190 are enriched in acidic residues; it reads LCSDLEEAPE. A WRPW motif motif is present at residues 221 to 224; it reads WRPW.

As to quaternary structure, transcription repression requires formation of a complex with a corepressor protein of the Groucho/TLE family. Interacts with HES1.

It localises to the nucleus. Its function is as follows. Does not bind DNA itself but suppresses both HES1-mediated N box-dependent transcriptional repression and binding of HES1 to E box sequences. Also suppresses HES1-mediated inhibition of the heterodimer formed by ASCL1/MASH1 and TCF3/E47, allowing ASCL1 and TCF3 to up-regulate transcription in its presence. Promotes cell differentiation. The protein is Transcription cofactor HES-6 of Homo sapiens (Human).